The sequence spans 213 residues: Golgi to ER traffic protein 1 (213 aa).

Topologically, residues 1 to 4 (MESW) are lumenal. The helical transmembrane segment at 5–25 (LLVILAFLVLERLWPLIDSLI) threads the bilayer. Topologically, residues 26-98 (QRFAQANSTK…RTKASLKKVK (73 aa)) are cytoplasmic. The stretch at 55–99 (AQDQYVKWTKNNRTLEKINKQIEEEKKQLLSQVDRTKASLKKVKL) forms a coiled coil. Residues 99 to 119 (LVLITVPFTILKFYKGKMPIY) traverse the membrane as a helical segment. Residues 120–158 (DLPKGLFPNYLQGLFQHGWVYLALGPLNIKKVGDGTHVT) lie on the Lumenal side of the membrane. Residues 159–175 (VSLAIWLFALLKVVSTL) form a helical membrane-spanning segment. The Cytoplasmic portion of the chain corresponds to 176 to 213 (GNIWESLTAPAIPAPTITTDPIDQTNESEKPPVDQPVD). Residues 193-213 (TTDPIDQTNESEKPPVDQPVD) are disordered.

This sequence belongs to the WRB/GET1 family. Component of the Golgi to ER traffic (GET) complex, which is composed of GET1, GET2 and GET3. Within the complex, GET1 and GET2 form a heterotetramer which is stabilized by phosphatidylinositol binding and which binds to the GET3 homodimer.

The protein localises to the endoplasmic reticulum membrane. Its subcellular location is the golgi apparatus membrane. In terms of biological role, required for the post-translational delivery of tail-anchored (TA) proteins to the endoplasmic reticulum. Together with GET2, acts as a membrane receptor for soluble GET3, which recognizes and selectively binds the transmembrane domain of TA proteins in the cytosol. The GET complex cooperates with the HDEL receptor ERD2 to mediate the ATP-dependent retrieval of resident ER proteins that contain a C-terminal H-D-E-L retention signal from the Golgi to the ER. The polypeptide is Golgi to ER traffic protein 1 (Kluyveromyces lactis (strain ATCC 8585 / CBS 2359 / DSM 70799 / NBRC 1267 / NRRL Y-1140 / WM37) (Yeast)).